The sequence spans 150 residues: Endoribonuclease YbeY (150 aa).

His-116, His-120, and His-126 together coordinate Zn(2+).

It belongs to the endoribonuclease YbeY family. The cofactor is Zn(2+).

The protein localises to the cytoplasm. Its function is as follows. Single strand-specific metallo-endoribonuclease involved in late-stage 70S ribosome quality control and in maturation of the 3' terminus of the 16S rRNA. This is Endoribonuclease YbeY from Mesomycoplasma hyopneumoniae (strain 232) (Mycoplasma hyopneumoniae).